An 864-amino-acid polypeptide reads, in one-letter code: Alanine--tRNA ligase (864 aa).

Residues histidine 534, histidine 538, cysteine 639, and histidine 643 each contribute to the Zn(2+) site.

It belongs to the class-II aminoacyl-tRNA synthetase family. Zn(2+) serves as cofactor.

It is found in the cytoplasm. The enzyme catalyses tRNA(Ala) + L-alanine + ATP = L-alanyl-tRNA(Ala) + AMP + diphosphate. Catalyzes the attachment of alanine to tRNA(Ala) in a two-step reaction: alanine is first activated by ATP to form Ala-AMP and then transferred to the acceptor end of tRNA(Ala). Also edits incorrectly charged Ser-tRNA(Ala) and Gly-tRNA(Ala) via its editing domain. The sequence is that of Alanine--tRNA ligase from Onion yellows phytoplasma (strain OY-M).